The sequence spans 562 residues: NAD-dependent malic enzyme (562 aa).

Tyr-101 acts as the Proton donor in catalysis. Arg-154 serves as a coordination point for NAD(+). The active-site Proton acceptor is Lys-172. A divalent metal cation contacts are provided by Glu-243, Asp-244, and Asp-267. Residues Asp-267 and Asn-415 each contribute to the NAD(+) site.

It belongs to the malic enzymes family. Homotetramer. Mg(2+) serves as cofactor. Mn(2+) is required as a cofactor.

The catalysed reaction is (S)-malate + NAD(+) = pyruvate + CO2 + NADH. It carries out the reaction oxaloacetate + H(+) = pyruvate + CO2. This Shewanella frigidimarina (strain NCIMB 400) protein is NAD-dependent malic enzyme.